The chain runs to 570 residues: Formate--tetrahydrofolate ligase (570 aa).

65–72 (TPFGEGKT) provides a ligand contact to ATP.

It belongs to the formate--tetrahydrofolate ligase family.

The enzyme catalyses (6S)-5,6,7,8-tetrahydrofolate + formate + ATP = (6R)-10-formyltetrahydrofolate + ADP + phosphate. The protein operates within one-carbon metabolism; tetrahydrofolate interconversion. This chain is Formate--tetrahydrofolate ligase, found in Shewanella halifaxensis (strain HAW-EB4).